Here is a 339-residue protein sequence, read N- to C-terminus: Leucine-rich repeat-containing protein 59 (339 aa).

Topologically, residues 1–282 (MARGGGKSGS…KHSWSRSVLR (282 aa)) are cytoplasmic. LRR repeat units follow at residues 10 to 31 (SLKDKLDGNELDLSLCGLSEVP), 40 to 61 (KATVLDLSCNSLVSLPSDFCSL), 63 to 84 (HLVKLDLSKNRLQQLPVDFGRL), and 86 to 107 (SLQHLDLLNNRLVTLPVSFAQL). Residues 181 to 254 (MKVIQSEQDR…EMEKKTKKET (74 aa)) adopt a coiled-coil conformation. Residues 186–275 (SEQDRERQRK…PPQPARHKHS (90 aa)) form a disordered region. A compositionally biased stretch (basic and acidic residues) spans 187–256 (EQDRERQRKL…EKKTKKETVQ (70 aa)). Residues 283–300 (ALLLVLLCILCTLAVCKL) traverse the membrane as a helical segment. Residues 301-339 (TELQHQPLCVSVNTLYEDVVAAVQNHKTLQNMLQQNSQQ) are Lumenal-facing.

Interacts with SGO1.

Its subcellular location is the microsome membrane. It is found in the endoplasmic reticulum membrane. It localises to the nucleus envelope. Its function is as follows. Required for nuclear import of FGF1. The protein is Leucine-rich repeat-containing protein 59 (LRRC59) of Gallus gallus (Chicken).